The primary structure comprises 301 residues: Diaminopimelate epimerase (301 aa).

The substrate site is built by asparagine 15, glutamine 47, and asparagine 67. Cysteine 76 (proton donor) is an active-site residue. Substrate-binding positions include 77 to 78 (GN), asparagine 163, asparagine 197, and 215 to 216 (ER). Catalysis depends on cysteine 224, which acts as the Proton acceptor. Substrate is bound at residue 225–226 (GS).

This sequence belongs to the diaminopimelate epimerase family. As to quaternary structure, homodimer.

Its subcellular location is the cytoplasm. The enzyme catalyses (2S,6S)-2,6-diaminopimelate = meso-2,6-diaminopimelate. The protein operates within amino-acid biosynthesis; L-lysine biosynthesis via DAP pathway; DL-2,6-diaminopimelate from LL-2,6-diaminopimelate: step 1/1. In terms of biological role, catalyzes the stereoinversion of LL-2,6-diaminopimelate (L,L-DAP) to meso-diaminopimelate (meso-DAP), a precursor of L-lysine and an essential component of the bacterial peptidoglycan. This chain is Diaminopimelate epimerase, found in Rhizobium etli (strain ATCC 51251 / DSM 11541 / JCM 21823 / NBRC 15573 / CFN 42).